Consider the following 355-residue polypeptide: Peptide chain release factor 1 (355 aa).

Position 231 is an N5-methylglutamine (Gln-231). Residues Ser-280–Lys-291 show a composition bias toward basic and acidic residues. Positions Ser-280–Ile-303 are disordered.

It belongs to the prokaryotic/mitochondrial release factor family. Methylated by PrmC. Methylation increases the termination efficiency of RF1.

It is found in the cytoplasm. Functionally, peptide chain release factor 1 directs the termination of translation in response to the peptide chain termination codons UAG and UAA. The polypeptide is Peptide chain release factor 1 (Campylobacter jejuni subsp. jejuni serotype O:2 (strain ATCC 700819 / NCTC 11168)).